Consider the following 282-residue polypeptide: ATP phosphoribosyltransferase (282 aa).

Belongs to the ATP phosphoribosyltransferase family. Long subfamily. It depends on Mg(2+) as a cofactor.

It localises to the cytoplasm. It catalyses the reaction 1-(5-phospho-beta-D-ribosyl)-ATP + diphosphate = 5-phospho-alpha-D-ribose 1-diphosphate + ATP. It functions in the pathway amino-acid biosynthesis; L-histidine biosynthesis; L-histidine from 5-phospho-alpha-D-ribose 1-diphosphate: step 1/9. Feedback inhibited by histidine. Catalyzes the condensation of ATP and 5-phosphoribose 1-diphosphate to form N'-(5'-phosphoribosyl)-ATP (PR-ATP). Has a crucial role in the pathway because the rate of histidine biosynthesis seems to be controlled primarily by regulation of HisG enzymatic activity. This is ATP phosphoribosyltransferase from Pyrobaculum islandicum (strain DSM 4184 / JCM 9189 / GEO3).